The sequence spans 284 residues: 2-dehydro-3-deoxyphosphooctonate aldolase (284 aa).

The protein belongs to the KdsA family.

It is found in the cytoplasm. It catalyses the reaction D-arabinose 5-phosphate + phosphoenolpyruvate + H2O = 3-deoxy-alpha-D-manno-2-octulosonate-8-phosphate + phosphate. Its pathway is carbohydrate biosynthesis; 3-deoxy-D-manno-octulosonate biosynthesis; 3-deoxy-D-manno-octulosonate from D-ribulose 5-phosphate: step 2/3. The protein operates within bacterial outer membrane biogenesis; lipopolysaccharide biosynthesis. This chain is 2-dehydro-3-deoxyphosphooctonate aldolase, found in Shigella boydii serotype 18 (strain CDC 3083-94 / BS512).